We begin with the raw amino-acid sequence, 168 residues long: uncharacterized protein (168 aa).

5 helical membrane-spanning segments follow: residues 15-33 (YLTVIIYRTGFVIAALAVL), 41-57 (LSLTFILIAATCCASSL), 73-93 (WIGLLFYINHYPALALGGALL), 108-128 (VPLLNLQPIFVACLWFSWVLN), and 129-149 (NLIALRIFSIISGVLLLVLAI).

Its subcellular location is the cell membrane. This is an uncharacterized protein from Haemophilus influenzae (strain ATCC 51907 / DSM 11121 / KW20 / Rd).